Reading from the N-terminus, the 339-residue chain is UPF0324 membrane protein M6_Spy0799 (339 aa).

9 consecutive transmembrane segments (helical) span residues 7–24 (KLPG…AWYL), 28–50 (FPII…FYEH), 57–79 (GISF…GLNL), 84–106 (AVGM…VAYG), 118–140 (ATLV…APVI), 150–172 (AISV…GQLL), 256–275 (FILF…SLGV), 290–307 (FIVM…LVKL), and 314–336 (AILL…QLSL).

It belongs to the UPF0324 family.

It is found in the cell membrane. This is UPF0324 membrane protein M6_Spy0799 from Streptococcus pyogenes serotype M6 (strain ATCC BAA-946 / MGAS10394).